The chain runs to 302 residues: Cyclin-dependent kinase 1-B (302 aa).

In terms of domain architecture, Protein kinase spans 4 to 287; sequence YTKIEKIGEG…ARKAMLHPYF (284 aa). Residues 10–18 and K33 each bind ATP; that span reads IGEGTYGVV. T14 is modified (phosphothreonine). Residue Y15 is modified to Phosphotyrosine; by wee1 and wee2. Residue D128 is the Proton acceptor of the active site. T161 is subject to Phosphothreonine; by cak. Phosphoserine is present on S277.

It belongs to the protein kinase superfamily. CMGC Ser/Thr protein kinase family. CDC2/CDKX subfamily. Forms a stable but non-covalent complex with a regulatory subunit and with a cyclin. Interacts with spdya. In terms of processing, phosphorylation at Tyr-15 by wee1 and wee2 inhibits the protein kinase activity and acts negative regulator of entry into mitosis (G2 to M transition).

It localises to the nucleus. The enzyme catalyses L-seryl-[protein] + ATP = O-phospho-L-seryl-[protein] + ADP + H(+). It carries out the reaction L-threonyl-[protein] + ATP = O-phospho-L-threonyl-[protein] + ADP + H(+). The catalysed reaction is [DNA-directed RNA polymerase] + ATP = phospho-[DNA-directed RNA polymerase] + ADP + H(+). Its activity is regulated as follows. Phosphorylation at Thr-14 or Tyr-15 inactivates the enzyme, while phosphorylation at Thr-161 activates it. In terms of biological role, plays a key role in the control of the eukaryotic cell cycle by modulating the centrosome cycle as well as mitotic onset; promotes G2-M transition via association with multiple interphase cyclins. During G2 and early mitosis, CDC25A/B/C-mediated dephosphorylation activates CDK1/cyclin complexes which phosphorylate several substrates that trigger at least centrosome separation, Golgi dynamics, nuclear envelope breakdown and chromosome condensation. Once chromosomes are condensed and aligned at the metaphase plate, CDK1 activity is switched off by WEE1- and PKMYT1-mediated phosphorylation to allow sister chromatid separation, chromosome decondensation, reformation of the nuclear envelope and cytokinesis. Catalyzes lamin (LMNA, LMNB1 and LMNB2) phosphorylation at the onset of mitosis, promoting nuclear envelope breakdown. This is Cyclin-dependent kinase 1-B (cdk1-b) from Xenopus laevis (African clawed frog).